The primary structure comprises 344 residues: TATA box-binding protein-like 2 (344 aa).

Positions Asn78–Asn143 are disordered. The span at Gly110–Ser120 shows a compositional bias: low complexity. Polar residues predominate over residues Ser134–Asn143.

It belongs to the TBP family. As to quaternary structure, interacts with TAF3.

It localises to the cytoplasm. Its subcellular location is the nucleus. Functionally, transcription factor required in complex with TAF3 for the differentiation of myoblasts into myocytes. The complex replaces TFIID at specific promoters at an early stage in the differentiation process. This chain is TATA box-binding protein-like 2, found in Rattus norvegicus (Rat).